A 441-amino-acid chain; its full sequence is Serine/threonine-protein phosphatase 2A activator 1 (441 aa).

Polar residues-rich tracts occupy residues 66 to 75 (NIPPSNTTHS) and 421 to 432 (QRQDDLNSTTYR). 2 disordered regions span residues 66 to 100 (NIPP…SSNQ) and 421 to 441 (QRQD…LGRN).

It belongs to the PTPA-type PPIase family.

It is found in the cytoplasm. The protein localises to the nucleus. It carries out the reaction [protein]-peptidylproline (omega=180) = [protein]-peptidylproline (omega=0). Its function is as follows. PPIases accelerate the folding of proteins. It catalyzes the cis-trans isomerization of proline imidic peptide bonds in oligopeptides. Acts as a regulatory subunit for PP2A-like phosphatases modulating their activity or substrate specificity, probably by inducing a conformational change in the catalytic subunit, a direct target of the PPIase. Can reactivate inactive phosphatase PP2A-phosphatase methylesterase complexes (PP2Ai) in presence of ATP and Mg(2+) by dissociating the inactive form from the complex. This Debaryomyces hansenii (strain ATCC 36239 / CBS 767 / BCRC 21394 / JCM 1990 / NBRC 0083 / IGC 2968) (Yeast) protein is Serine/threonine-protein phosphatase 2A activator 1 (RRD1).